A 114-amino-acid chain; its full sequence is Protein preY, mitochondrial (114 aa).

The transit peptide at 1–35 (MLSGARCRLASALRGTRAPPSAVARRCLHASGSRP) directs the protein to the mitochondrion. Residues 14–49 (RGTRAPPSAVARRCLHASGSRPLADRGKKTEEPPRD) form a disordered region. The span at 36 to 49 (LADRGKKTEEPPRD) shows a compositional bias: basic and acidic residues. The 47-residue stretch at 51-97 (DPALLEFLVCPLSKKPLRYEASTNELINEELGIAYPIIDGIPNMIPQ) folds into the TRM112 domain.

The protein belongs to the PREY family. In terms of assembly, interacts (via TRM112 domain) with NDUFAF5; the interaction is direct and stabilizes NDUFAF5 protein. Interacts with COQ5; the interaction is direct, stabilizes COQ5 protein and associates PYURF with COQ enzyme complex.

The protein resides in the mitochondrion. In terms of biological role, in mitochondria, S-adenosylmethionine-dependent methyltransferase chaperone that supports both coenzyme Q biosynthesis, by stabilizing its components, such as COQ5, and NADH:ubiquinone oxidoreductase complex (complex I, MT-ND1) assembly, by stabilizing complex I assembly factors, such as NDUFAF5. This Homo sapiens (Human) protein is Protein preY, mitochondrial.